The sequence spans 84 residues: Sulfur carrier protein TusA (84 aa).

Cysteine 19 acts as the Cysteine persulfide intermediate in catalysis.

It belongs to the sulfur carrier protein TusA family. In terms of assembly, interacts with IscS.

The protein localises to the cytoplasm. Its pathway is tRNA modification. Functionally, sulfur carrier protein involved in sulfur trafficking in the cell. Part of a sulfur-relay system required for 2-thiolation during synthesis of 2-thiouridine of the modified wobble base 5-methylaminomethyl-2-thiouridine (mnm(5)s(2)U) in tRNA. Interacts with IscS and stimulates its cysteine desulfurase activity. Accepts an activated sulfur from IscS, which is then transferred to TusD, and thus determines the direction of sulfur flow from IscS to 2-thiouridine formation. Also appears to be involved in sulfur transfer for the biosynthesis of molybdopterin. The polypeptide is Sulfur carrier protein TusA (Sodalis glossinidius (strain morsitans)).